The sequence spans 622 residues: Polyamine transporter 3 (622 aa).

Polar residues predominate over residues 1–47; sequence MNRQESINSFNSDETSSLSDVESQQPQQYIPSESGSKSNMAPNQLKL. The tract at residues 1-76 is disordered; that stretch reads MNRQESINSF…VPDVNAPQSS (76 aa). Residues 1-182 are Cytoplasmic-facing; the sequence is MNRQESINSF…WPAWIRWSYT (182 aa). Residue Ser55 is modified to Phosphoserine. Position 98 is a phosphothreonine (Thr98). Ser101 and Ser132 each carry phosphoserine. The segment at 105–152 is disordered; that stretch reads TSTAISRTRTRQIDGASSPSSNEDALESDNNEKGKEGDSSGANDEAPD. The chain crosses the membrane as a helical span at residues 183 to 203; it reads VLLSILVICVAYGSACISGGL. The Extracellular segment spans residues 204–215; sequence GTVEKKYHVGME. A helical membrane pass occupies residues 216 to 236; that stretch reads AAILSVSLMVIGFSLGPLIWS. The Cytoplasmic segment spans residues 237-245; that stretch reads PVSDLYGRR. Residues 246 to 266 form a helical membrane-spanning segment; the sequence is VAYFVSMGLYVIFNIPCALAP. Residues 267-275 are Extracellular-facing; sequence NLGSLLACR. A helical membrane pass occupies residues 276–296; the sequence is FLCGVWSSSGLCLVGGSIADM. The Cytoplasmic segment spans residues 297–305; the sequence is FPSETRGKA. The chain crosses the membrane as a helical span at residues 306 to 326; that stretch reads IAFFAFAPYVGPVVGPLVNGF. Residues 327 to 335 are Extracellular-facing; the sequence is ISVSTGRMD. The helical transmembrane segment at 336–356 threads the bilayer; that stretch reads LIFWVNMAFAGVMWIISSAIP. Topologically, residues 357–416 are cytoplasmic; the sequence is ETYAPVILKRKAARLRKETGNPKIMTEQEAQGVSMGEMMRACLLRPLYFSVTEPVLVATC. A helical transmembrane segment spans residues 417-437; the sequence is FYVCLIYSLLYAFFFAFPVIF. The Extracellular segment spans residues 438–446; sequence GELYGYKDN. Residues 447–467 traverse the membrane as a helical segment; the sequence is LVGLMFIPIVIGALWALATTF. At 468–487 the chain is on the cytoplasmic side; sequence YCENKYLQIVKQRKPTPEDR. A helical transmembrane segment spans residues 488 to 508; that stretch reads LLGAKIGAPFAAIALWILGAT. Residues 509 to 512 are Extracellular-facing; that stretch reads AYKH. Residues 513-533 traverse the membrane as a helical segment; that stretch reads IIWVGPASAGLAFGFGMVLIY. Topologically, residues 534–550 are cytoplasmic; it reads YSLNNYIIDCYVQYASS. Residues 551 to 571 form a helical membrane-spanning segment; sequence ALATKVFLRSAGGAAFPLFTI. The Extracellular portion of the chain corresponds to 572 to 583; that stretch reads QMYHKLNLHWGS. Residues 584 to 604 traverse the membrane as a helical segment; the sequence is WLLAFISTAMIALPFAFSYWG. Over 605-622 the chain is Cytoplasmic; the sequence is KGLRHKLSKKDYSIDSIE.

This sequence belongs to the major facilitator superfamily. DHA1 family. Polyamines/proton antiporter (TC 2.A.1.2.16) subfamily.

It is found in the cell membrane. In terms of biological role, cell membrane polyamine/proton antiporter, involved in the detoxification of excess polyamines in the cytoplasm. Recognizes spermine, but not spermidine. This Saccharomyces cerevisiae (strain ATCC 204508 / S288c) (Baker's yeast) protein is Polyamine transporter 3 (TPO3).